The chain runs to 679 residues: MIHREKYHHLRIRLASPEQIRSWAERVLPNGEIVGQVTKPYTLHYKTHKPEKDGLFCERIFGPIKSGICACGKYQIIEKYSKFCEQCGVEFVESRVRRYRMGYIKLACPVTHVWYLKRLPSYIANLLAKPLKELESLVYCDLFLARPISKKPILLKLRGLFKYEDQSWREIFPRYFSSRGFEAFQNKEIATGGDAIKKQLSNLDLQGVLDYAYIEWKELVEQKSTGNEWEDRKIQRRKDLLVRRIKLAKQFLQTNIKPEWMVLSLLPVLPPELRPMIELGEGELITSDLNELYRRVIYRNNTLIDFLARSGSTPGGLVVCQIRLVQEAVDGLIDNGIRGQPMKDSHNRPYKSFSDVIEGKEGRFRENLLGKRVDYSGRSVIVVGPFLSLHQCGLPREMAIELFQAFVIRGLIGRHLAPNLRAAKSMIQNKEPIIWKILQEIMQGHPVLLNRAPTLHRLGIQAFQPILIKGRAIRLHPLVCGGFNADFDGDQMAVHIPLSLEAQAEARLLMFSHTNLLSPATGDPVSVPSQDMLLGLYILTIKNHQGIYGNKNHPYKQNNNKIFLNKTPYFSSYDDVIKAYNQKKVRLHSALWLWWGSKLRTITSINREKPIEVQYNSSGISFKIYEHYQLKKNKNEKNFSVYICTTVGRIIFNQQIEEAIQGTLKASLFRNQSLPAITI.

Zn(2+) is bound by residues C69, C71, C84, and C87. Mg(2+)-binding residues include D486, D488, and D490.

The protein belongs to the RNA polymerase beta' chain family. RpoC1 subfamily. In plastids the minimal PEP RNA polymerase catalytic core is composed of four subunits: alpha, beta, beta', and beta''. When a (nuclear-encoded) sigma factor is associated with the core the holoenzyme is formed, which can initiate transcription. Requires Mg(2+) as cofactor. The cofactor is Zn(2+).

It localises to the plastid. The protein localises to the chloroplast. It carries out the reaction RNA(n) + a ribonucleoside 5'-triphosphate = RNA(n+1) + diphosphate. DNA-dependent RNA polymerase catalyzes the transcription of DNA into RNA using the four ribonucleoside triphosphates as substrates. The protein is DNA-directed RNA polymerase subunit beta' of Physcomitrium patens (Spreading-leaved earth moss).